Reading from the N-terminus, the 483-residue chain is Cobyric acid synthase (483 aa).

In terms of domain architecture, GATase cobBQ-type spans 248–435 (LLKVVVPVLP…LHGLFETPAA (188 aa)). Cysteine 329 functions as the Nucleophile in the catalytic mechanism. Histidine 427 is a catalytic residue.

It belongs to the CobB/CobQ family. CobQ subfamily.

It functions in the pathway cofactor biosynthesis; adenosylcobalamin biosynthesis. In terms of biological role, catalyzes amidations at positions B, D, E, and G on adenosylcobyrinic A,C-diamide. NH(2) groups are provided by glutamine, and one molecule of ATP is hydrogenolyzed for each amidation. This chain is Cobyric acid synthase, found in Pseudomonas fluorescens (strain ATCC BAA-477 / NRRL B-23932 / Pf-5).